We begin with the raw amino-acid sequence, 330 residues long: uncharacterized protein (330 aa).

A run of 10 helical transmembrane segments spans residues 15 to 35 (LTLI…KGVL), 41 to 61 (FFVA…WAMG), 72 to 92 (GWGW…GFLA), 102 to 122 (LGSV…SWLF), 125 to 145 (VIGG…SLIG), 175 to 195 (LWML…PFVS), 201 to 221 (VVAT…IALV), 238 to 258 (LAYA…YLAS), 264 to 284 (SLSS…NLIL), and 286 to 306 (EQLS…IYLI). EamA domains follow at residues 22-146 (FLWG…LIGL) and 182-308 (LSMA…LINQ).

It belongs to the EamA transporter family.

The protein resides in the cell membrane. This is an uncharacterized protein from Synechocystis sp. (strain ATCC 27184 / PCC 6803 / Kazusa).